A 458-amino-acid chain; its full sequence is BTB/POZ domain-containing protein At5g41330 (458 aa).

Residues 11–72 (NVVSINVGGR…LRTGNLPARS (62 aa)) enclose the BTB domain. WD repeat units follow at residues 259-305 (DSAI…MVWE), 360-399 (LNER…LVGN), and 421-458 (SGEN…GISI).

Its pathway is protein modification; protein ubiquitination. In terms of biological role, may act as a substrate-specific adapter of an E3 ubiquitin-protein ligase complex (CUL3-RBX1-BTB) which mediates the ubiquitination and subsequent proteasomal degradation of target proteins. This chain is BTB/POZ domain-containing protein At5g41330, found in Arabidopsis thaliana (Mouse-ear cress).